A 3033-amino-acid chain; its full sequence is Genome polyprotein (3033 aa).

The residue at position 2 (S2) is an N-acetylserine; by host. Residues 2 to 23 (STNPKPQRKTKRNTNRRPQDVK) form an interaction with STAT1 region. Positions 2–58 (STNPKPQRKTKRNTNRRPQDVKFPGGGQIVGGVYLLPRRGPRLGVRATRKTSERSQP) are interaction with EIF2AK2/PKR. The tract at residues 2 to 59 (STNPKPQRKTKRNTNRRPQDVKFPGGGQIVGGVYLLPRRGPRLGVRATRKTSERSQPR) is interaction with DDX3X. Positions 2–75 (STNPKPQRKT…PKDRRSAGKS (74 aa)) are disordered. The Cytoplasmic portion of the chain corresponds to 2 to 168 (STNPKPQRKT…EDGINYATGN (167 aa)). Short sequence motifs (nuclear localization signal) lie at residues 5–13 (PKPQRKTKR) and 38–43 (PRRGPR). The span at 7–16 (PQRKTKRNTN) shows a compositional bias: basic residues. Over residues 32 to 47 (GGVYLLPRRGPRLGVR) the composition is skewed to low complexity. At S53 the chain carries Phosphoserine; by host. Short sequence motifs (nuclear localization signal) lie at residues 58–64 (PRGRRQP) and 66–71 (PKDRRS). Residues S99 and S116 each carry the phosphoserine; by host modification. Residues 112 to 152 (PRHRSRNLGKVIDTLTCGFADLMGYIPVVGAPVGGVARALA) are important for endoplasmic reticulum and mitochondrial localization. The interval 122–173 (VIDTLTCGFADLMGYIPVVGAPVGGVARALAHGVRVLEDGINYATGNLPGCS) is interaction with APOA2. The interval 164 to 167 (YATG) is important for lipid droplets localization. A helical membrane pass occupies residues 169 to 189 (LPGCSFSIFLLALLSCMSVPV). A propeptide spans 178–191 (LLALLSCMSVPVSA) (ER anchor for the core protein, removed in mature form by host signal peptidase). Topologically, residues 190–358 (SAVEVKNTSQ…TGAHWGVMFG (169 aa)) are lumenal. Residues N196, N209, and N234 are each glycosylated (N-linked (GlcNAc...) asparagine; by host). The interval 265–296 (IVVSATFCSALYIGDVCGAIMIAAQATIISPQ) is important for fusion. N305 carries an N-linked (GlcNAc...) asparagine; by host glycan. The chain crosses the membrane as a helical span at residues 359–379 (LAYFSMQGAWAKVVVILLLTA). At 380 to 729 (GVDAQTHTIS…WEWVVLLFLL (350 aa)) the chain is on the lumenal side. The segment at 385-412 (THTISGHAARTTHGLVSLFTPGSQQNIQ) is HVR1. N-linked (GlcNAc...) (high mannose) asparagine; by host glycosylation is found at N417, N423, and N430. 4 disulfide bridges follow: C429/C554, C452/C459, C488/C496, and C505/C510. A glycan (N-linked (GlcNAc...) asparagine; by host) is linked at N448. Positions 475-480 (EENVTN) are HVR2. N-linked (GlcNAc...) asparagine; by host glycosylation is present at N477. Positions 482–495 (DNMRPYCWHYPPRP) are CD81-binding 1. N534 carries an N-linked (GlcNAc...) asparagine; by host glycan. The CD81-binding 2 stretch occupies residues 546 to 553 (PPRGAWFG). N558 carries N-linked (GlcNAc...) asparagine; by host glycosylation. Disulfide bonds link C566/C571, C585/C589, C601/C624, and C611/C648. 2 N-linked (GlcNAc...) (high mannose) asparagine; by host glycosylation sites follow: N627 and N649. A disulfide bridge links C656 with C681. Positions 664–675 (SQLSPLLHSTTE) are PKR/eIF2-alpha phosphorylation homology domain (PePHD). The chain crosses the membrane as a helical span at residues 730-750 (LADARVCACLWMLLLLGQAEA). The Lumenal segment spans residues 751 to 761 (ALEKLVILHAA). The chain crosses the membrane as a helical span at residues 762–782 (SAASSHGMLCFIIFFIAAWYI). Topologically, residues 783 to 786 (KGRV) are cytoplasmic. A helical membrane pass occupies residues 787–807 (TPLVTYSYLGMWSFSLLLLAL). Residues 808 to 817 (PQQAYALDTT) lie on the Lumenal side of the membrane. Residues 818–838 (EQGQIGLVLLVVISVFTLSPA) form a helical membrane-spanning segment. At 839-885 (YKILLCRSLWWLSYLLVRAEALIQDWVPPWQARGGRDGIIWAATIFC) the chain is on the cytoplasmic side. The helical transmembrane segment at 886 to 906 (PGVLFDITNWLLAILGPGYLL) threads the bilayer. In terms of domain architecture, Peptidase C18 spans 903 to 1030 (GYLLRSVLTS…EYTSKGWKLL (128 aa)). The Lumenal segment spans residues 907–932 (RSVLTSTPYFVRAQALLRICAAVRHL). A protease NS2-3 region spans residues 908 to 1210 (SVLTSTPYFV…PIESLDVIIR (303 aa)). Residue C926 is the site of S-palmitoyl cysteine; by host attachment. Residues 933-953 (SGGKYVQMMLLTLGKWTGTYI) traverse the membrane as a helical segment. Positions 933–953 (SGGKYVQMMLLTLGKWTGTYI) are interaction with host SCPS1. The Cytoplasmic portion of the chain corresponds to 954 to 1661 (YDHLSPMSGW…CMQADLEIMT (708 aa)). Residues H956, E976, and C997 each act as for protease NS2 activity; shared with dimeric partner in the active site. The Peptidase S29 domain occupies 1031-1212 (APITAYAQQT…ESLDVIIRSP (182 aa)). Catalysis depends on charge relay system; for serine protease NS3 activity residues H1087 and D1111. 2 residues coordinate Zn(2+): C1127 and C1129. Residue S1169 is the Charge relay system; for serine protease NS3 activity of the active site. Zn(2+) contacts are provided by C1175 and H1179. The Helicase ATP-binding domain occupies 1221-1373 (PAVPQTYQVG…PNIEEVALGH (153 aa)). Residue 1234–1241 (APTGSGKS) coordinates ATP. S1241 and E1321 together coordinate Mg(2+). The DECH box motif lies at 1320–1323 (DECH). The segment at 1490-1502 (QRRGRTGRGRLGI) is RNA-binding. A helical membrane pass occupies residues 1662-1682 (STWVLAGGVLAAIAAYCLATG). An NS3-binding region spans residues 1683-1694 (CVVCIGRVNINQ). At 1683-1809 (CVVCIGRVNI…ALTSPLPTST (127 aa)) the chain is on the cytoplasmic side. Residues 1810–1830 (TILLNIMGGWLASQIAPAAGA) form a helical membrane-spanning segment. Topologically, residues 1831-1832 (TG) are lumenal. The chain crosses the membrane as a helical span at residues 1833-1853 (FVVSGLVGAAVGSIGLGKILV). Position 1854 (D1854) is a topological domain, cytoplasmic. Residues 1855–1875 (VLAGYGAGISGALVAFKIMSG) traverse the membrane as a helical segment. The Lumenal segment spans residues 1876-1885 (EKPSVEDVVN). Residues 1886-1906 (LLPGILSPGALVVGVICAAIL) traverse the membrane as a helical segment. The Cytoplasmic portion of the chain corresponds to 1907–1976 (RRHVGQGEGA…WITEDCPVPC (70 aa)). C1976 carries the S-palmitoyl cysteine; by host lipid modification. The stretch at 1977 to 2007 (AGSWLRDIWDWACTILTDFKNWLSTKLLPKM) is an intramembrane region. The Cytoplasmic portion of the chain corresponds to 2008–3012 (PGLPFISCQR…YHSVSRARPR (1005 aa)). Residues C2015, C2033, C2035, and C2056 each contribute to the Zn(2+) site. The interval 2124 to 2212 (EFFSWVDGVQ…ASSSASQLSA (89 aa)) is FKBP8-binding. A transcriptional activation region spans residues 2124–2332 (EFFSWVDGVQ…PTPPPRRRRA (209 aa)). Residues 2139–2143 (PTPKP) form an interaction with non-structural protein 4A region. Residues 2193 to 2212 (RLARGSPPSEASSSASQLSA) are disordered. The interaction with host SKP2 stretch occupies residues 2193–2460 (RLARGSPPSE…ALITPCGPEE (268 aa)). 6 positions are modified to phosphoserine; by host: S2198, S2201, S2205, S2208, S2211, and S2214. Residues 2198-2212 (SPPSEASSSASQLSA) are compositionally biased toward low complexity. The segment at 2214-2249 (SLRATCTAHAKNYAVEMVDANFFMGSDVTRIESETK) is ISDR. Positions 2214–2275 (SLRATCTAHA…REPSVPSEYL (62 aa)) are interaction with EIF2AK2/PKR. Residues 2249–2306 (KVLILDSLDPSVEEEDEREPSVPSEYLLPKKKFPQALPVWARPDYNPPVVETWKRPDY) are NS4B-binding. The tract at residues 2299-2376 (ETWKRPDYDP…MDTTDATDQP (78 aa)) is V3. Positions 2308–2328 (PPTVSGCALPPRVTAPTPPPR) are disordered. Positions 2322–2325 (APTP) match the SH3-binding motif. Positions 2327-2335 (PRRRRALVL) match the Nuclear localization signal motif. A Glycyl lysine isopeptide (Lys-Gly) (interchain with G-Cter in ubiquitin) cross-link involves residue K2350. Positions 2353–2431 (GQLPPSCDSG…PDLDSGSWST (79 aa)) are disordered. Polar residues predominate over residues 2361 to 2373 (SGRSTGMDTTDAT). 2 positions are modified to phosphoserine; by host: S2471 and S2484. The region spanning 2656-2774 (PMGFSYDTRC…ISESQGAEED (119 aa)) is the RdRp catalytic domain. 3 residues coordinate Mg(2+): D2662, D2760, and D2761. A helical transmembrane segment spans residues 3013–3033 (FLLLCLLLLSVGVGIFLLPAR).

This sequence belongs to the hepacivirus polyprotein family. As to quaternary structure, homooligomer. Interacts with E1 (via C-terminus). Interacts with the non-structural protein 5A. Interacts (via N-terminus) with host STAT1 (via SH2 domain); this interaction results in decreased STAT1 phosphorylation and ubiquitin-mediated proteasome-dependent STAT1 degradation, leading to decreased IFN-stimulated gene transcription. Interacts with host STAT3; this interaction constitutively activates STAT3. Interacts with host LTBR receptor. Interacts with host TNFRSF1A receptor and possibly induces apoptosis. Interacts with host HNRPK. Interacts with host YWHAE. Interacts with host UBE3A/E6AP. Interacts with host DDX3X. Interacts with host APOA2. Interacts with host RXRA protein. Interacts with host SP110 isoform 3/Sp110b; this interaction sequesters the transcriptional corepressor SP110 away from the nucleus. Interacts with host CREB3 nuclear transcription protein; this interaction triggers cell transformation. Interacts with host ACY3. Interacts with host C1QR1. Interacts with host RBM24; this interaction, which enhances the interaction of the mature core protein with 5'-UTR, may inhibit viral translation and favor replication. Interacts with host EIF2AK2/PKR; this interaction induces the autophosphorylation of EIF2AK2. Part of the viral assembly initiation complex composed of NS2, E1, E2, NS3, NS4A, NS5A and the mature core protein. In terms of assembly, forms a heterodimer with envelope glycoprotein E2. Interacts with mature core protein. Interacts with protease NS2. The heterodimer E1/E2 interacts with host CLDN1; this interaction plays a role in viral entry into host cell. Interacts with host SPSB2 (via C-terminus). Part of the viral assembly initiation complex composed of NS2, E1, E2, NS3, NS4A, NS5A and the mature core protein. Interacts with host NEURL3; this interaction prevents E1 binding to glycoprotein E2. Forms a heterodimer with envelope glycoprotein E1. Interacts with host CD81 and SCARB1 receptors; these interactions play a role in viral entry into host cell. Interacts with host EIF2AK2/PKR; this interaction inhibits EIF2AK2 and probably allows the virus to evade the innate immune response. Interacts with host CD209/DC-SIGN and CLEC4M/DC-SIGNR. Interact with host SPCS1; this interaction is essential for viral particle assembly. Interacts with protease NS2. The heterodimer E1/E2 interacts with host CLDN1; this interaction plays a role in viral entry into host cell. Part of the viral assembly initiation complex composed of NS2, E1, E2, NS3, NS4A, NS5A and the mature core protein. Interacts with host SLC3A2/4F2hc; the interaction may facilitate viral entry into host cell. Interacts with human PLSCR1. As to quaternary structure, homohexamer. Homoheptamer. Interacts with protease NS2. In terms of assembly, homodimer. Interacts with host SPCS1; this interaction is essential for viral particle assembly. Interacts with envelope glycoprotein E1. Interacts with envelope glycoprotein E2. Interacts with viroporin p7. Interacts with serine protease/helicase NS3. Part of the replication complex composed of NS2, NS3, NS4A, NS4B, NS5A and the RNA-directed RNA polymerase embedded in an ER-derived membranous web. Part of the viral assembly initiation complex composed of NS2, E1, E2, NS3, NS4A, NS5A and the mature core protein. Interacts with protease NS2. Interacts with non-structural protein 4A; this interaction stabilizes the folding of NS3 serine protease. NS3-NS4A interaction is essential for NS3 activation and allows membrane anchorage of the latter. NS3/NS4A complex also prevents phosphorylation of host IRF3, thus preventing the establishment of dsRNA induced antiviral state. Interacts with host MAVS; this interaction leads to the cleavage and inhibition of host MAVS. Interacts with host TICAM1; this interaction leads to the cleavage and inhibition of host TICAM1. Interacts with host TANK-binding kinase/TBK1; this interaction results in the inhibition of the association between TBK1 and IRF3, which leads to the inhibition of IRF3 activation. Interacts with host RBM24. Part of the replication complex composed of NS2, NS3, NS4A, NS4B, NS5A and the RNA-directed RNA polymerase embedded in an ER-derived membranous web. Part of the viral assembly initiation complex composed of NS2, E1, E2, NS3, NS4A, NS5A and the mature core protein. As to quaternary structure, interacts with NS3 serine protease; this interaction stabilizes the folding of NS3 serine protease. NS3-NS4A interaction is essential for NS3 activation and allows membrane anchorage of the latter. Interacts with non-structural protein 5A (via N-terminus). Part of the replication complex composed of NS2, NS3, NS4A, NS4B, NS5A and the RNA-directed RNA polymerase embedded in an ER-derived membranous web. Part of the viral assembly initiation complex composed of NS2, E1, E2, NS3, NS4A, NS5A and the mature core protein. In terms of assembly, homomultimer. Interacts with non-structural protein NS5A. Interacts with host PLA2G4C; this interaction likely initiates the recruitment of replication complexes to lipid droplets. Interacts with host STING; this interaction disrupts the interaction between STING and TBK1 thereby suppressing the interferon signaling. Part of the replication complex composed of NS2, NS3, NS4A, NS4B, NS5A and the RNA-directed RNA polymerase embedded in an ER-derived membranous web. Monomer. Homodimer; dimerization is required for RNA-binding. Interacts with the mature core protein. Interacts (via N-terminus) with non-structural protein 4A. Interacts with non-structural protein 4B. Interacts (via region D2) with RNA-directed RNA polymerase. Part of the viral assembly initiation complex composed of NS2, E1, E2, NS3, NS4A, NS5A and the mature core protein. Part of the replication complex composed of NS2, NS3, NS4A, NS4B, NS5A and the RNA-directed RNA polymerase embedded in an ER-derived membranous web. Interacts with host GRB2. Interacts with host BIN1. Interacts with host PIK3R1. Interacts with host SRCAP. Interacts with host FKBP8. Interacts (via C-terminus) with host VAPB (via MSP domain). Interacts with host EIF2AK2/PKR; this interaction leads to disruption of EIF2AK2 dimerization by NS5A and probably allows the virus to evade the innate immune response. Interacts (via N-terminus) with host PACSIN2 (via N-terminus); this interaction attenuates protein kinase C alpha-mediated phosphorylation of PACSIN2 by disrupting the interaction between PACSIN2 and PRKCA. Interacts (via N-terminus) with host SRC kinase (via SH2 domain). Interacts with most Src-family kinases. Interacts with host IFI27 and SKP2; promotes the ubiquitin-mediated proteasomal degradation of NS5A. Interacts with host GPS2. Interacts with host TNFRSF21; this interaction allows the modulation by the virus of JNK, p38 MAPK, STAT3, and Akt signaling pathways in a DR6-dependent manner. Interacts (via N-terminus) with host CIDEB (via N-terminus); this interaction seems to regulate the association of HCV particles with APOE. Interacts with host CHKA/Choline Kinase-alpha; CHKA bridges host PI4KA and NS5A and potentiates NS5A-stimulated PI4KA activity, which then facilitates the targeting of the ternary complex to the ER for viral replication. Interacts with host SPSB2 (via C-terminus); this interaction targets NS5A for ubiquitination and degradation. Interacts with host RAB18; this interaction may promote the association of NS5A and other replicase components with lipid droplets. Interacts (via region D2) with host PPIA/CYPA; the interaction stimulates RNA-binding ability of NS5A and is dependent on the peptidyl-prolyl cis-trans isomerase activity of PPIA/CYPA. Interacts with host TRIM14; this interaction induces the degradation of NS5A. As to quaternary structure, homooligomer. Interacts with non-structural protein 5A. Interacts with host VAPB. Interacts with host PRK2/PKN2. Interacts with host HNRNPA1 and SEPT6; these interactions facilitate viral replication. Part of the replication complex composed of NS2, NS3, NS4A, NS4B, NS5A and the RNA-directed RNA polymerase. The cofactor is Zn(2+). Mg(2+) is required as a cofactor. In terms of processing, specific enzymatic cleavages in vivo yield mature proteins. The structural proteins, core, E1, E2 and p7 are produced by proteolytic processing by host signal peptidases. The core protein precursor is synthesized as a 23 kDa, which is retained in the ER membrane through the hydrophobic signal peptide. Cleavage by the signal peptidase releases the 21 kDa mature core protein. The cleavage of the core protein precursor occurs between aminoacids 176 and 188 but the exact cleavage site is not known. Some degraded forms of the core protein appear as well during the course of infection. The other proteins (p7, NS2, NS3, NS4A, NS4B, NS5A and NS5B) are cleaved by the viral proteases. Autoprocessing between NS2 and NS3 is mediated by the NS2 cysteine protease catalytic domain and regulated by the NS3 N-terminal domain. Post-translationally, phosphorylated by host PKC and PKA. Ubiquitinated; mediated by UBE3A and leading to core protein subsequent proteasomal degradation. In terms of processing, highly N-glycosylated. Post-translationally, palmitoylation is required for NS2/3 autoprocessing and E2 recruitment to membranes. Palmitoylated. This modification may play a role in its polymerization or in protein-protein interactions. In terms of processing, phosphorylated on serines in a basal form termed p56. p58 is a hyperphosphorylated form of p56. p56 and p58 coexist in the cell in roughly equivalent amounts. Hyperphosphorylation is dependent on the presence of NS4A. Host CSNK1A1/CKI-alpha or RPS6KB1 kinases may be responsible for NS5A phosphorylation. Post-translationally, tyrosine phosphorylation is essential for the interaction with host SRC. Ubiquitinated. Ubiquitination, most probably at Lys-2350, mediated by host IFI27 and SKP2 leads to proteasomal degradation, restricting viral infection. Ubiquitination by host TRIM22 leads to interruption of viral replication. In terms of processing, the N-terminus is phosphorylated by host PRK2/PKN2.

Its subcellular location is the host endoplasmic reticulum membrane. It is found in the host mitochondrion membrane. The protein localises to the virion. The protein resides in the host cytoplasm. It localises to the host nucleus. Its subcellular location is the host lipid droplet. It is found in the virion membrane. The protein localises to the host mitochondrion. The protein resides in the host cell membrane. It localises to the host perinuclear region. The enzyme catalyses Hydrolysis of four peptide bonds in the viral precursor polyprotein, commonly with Asp or Glu in the P6 position, Cys or Thr in P1 and Ser or Ala in P1'.. The catalysed reaction is a ribonucleoside 5'-triphosphate + H2O = a ribonucleoside 5'-diphosphate + phosphate + H(+). It carries out the reaction ATP + H2O = ADP + phosphate + H(+). It catalyses the reaction RNA(n) + a ribonucleoside 5'-triphosphate = RNA(n+1) + diphosphate. Inhibited by the antiviral drug hexamethylene amiloride. Inhibition by amantadine appears to be genotype-dependent. Also inhibited by long-alkyl-chain iminosugar derivatives. Its activity is regulated as follows. Activity is up-regulated by PRK2/PKN2-mediated phosphorylation. Packages viral RNA to form a viral nucleocapsid, and promotes virion budding. Participates in the viral particle production as a result of its interaction with the non-structural protein 5A. Binds RNA and may function as a RNA chaperone to induce the RNA structural rearrangements taking place during virus replication. Modulates viral translation initiation by interacting with viral IRES and 40S ribosomal subunit. Affects various cell signaling pathways, host immunity and lipid metabolism. Prevents the establishment of cellular antiviral state by blocking the interferon-alpha/beta (IFN-alpha/beta) and IFN-gamma signaling pathways and by blocking the formation of phosphorylated STAT1 and promoting ubiquitin-mediated proteasome-dependent degradation of STAT1. Activates STAT3 leading to cellular transformation. Regulates the activity of cellular genes, including c-myc and c-fos. May repress the promoter of p53, and sequester CREB3 and SP110 isoform 3/Sp110b in the cytoplasm. Represses cell cycle negative regulating factor CDKN1A, thereby interrupting an important check point of normal cell cycle regulation. Targets transcription factors involved in the regulation of inflammatory responses and in the immune response: suppresses TNF-induced NF-kappa-B activation, and activates AP-1. Binds to dendritic cells (DCs) via C1QR1, resulting in down-regulation of T-lymphocytes proliferation. Alters lipid metabolism by interacting with hepatocellular proteins involved in lipid accumulation and storage. Induces up-regulation of FAS promoter activity, and thereby contributes to the increased triglyceride accumulation in hepatocytes (steatosis). Its function is as follows. Forms a heterodimer with envelope glycoprotein E2, which mediates virus attachment to the host cell, virion internalization through clathrin-dependent endocytosis and fusion with host membrane. Fusion with the host cell is most likely mediated by both E1 and E2, through conformational rearrangements of the heterodimer required for fusion rather than a classical class II fusion mechanism. E1/E2 heterodimer binds host apolipoproteins such as APOB and ApoE thereby forming a lipo-viro-particle (LVP). APOE associated to the LVP allows the initial virus attachment to cell surface receptors such as the heparan sulfate proteoglycans (HSPGs), syndecan-1 (SDC1), syndecan-1 (SDC2), the low-density lipoprotein receptor (LDLR) and scavenger receptor class B type I (SCARB1). The cholesterol transfer activity of SCARB1 allows E2 exposure and binding of E2 to SCARB1 and the tetraspanin CD81. E1/E2 heterodimer binding on CD81 activates the epithelial growth factor receptor (EGFR) signaling pathway. Diffusion of the complex E1-E2-EGFR-SCARB1-CD81 to the cell lateral membrane allows further interaction with Claudin 1 (CLDN1) and occludin (OCLN) to finally trigger HCV entry. Functionally, forms a heterodimer with envelope glycoprotein E1, which mediates virus attachment to the host cell, virion internalization through clathrin-dependent endocytosis and fusion with host membrane. Fusion with the host cell is most likely mediated by both E1 and E2, through conformational rearrangements of the heterodimer required for fusion rather than a classical class II fusion mechanism. The interaction between envelope glycoprotein E2 and host apolipoprotein E/APOE allows the proper assembly, maturation and infectivity of the viral particles. This interaction is probably promoted via the up-regulation of cellular autophagy by the virus. E1/E2 heterodimer binds host apolipoproteins such as APOB and APOE thereby forming a lipo-viro-particle (LVP). APOE associated to the LVP allows the initial virus attachment to cell surface receptors such as the heparan sulfate proteoglycans (HSPGs), syndecan-1 (SDC1), syndecan-1 (SDC2), the low-density lipoprotein receptor (LDLR) and scavenger receptor class B type I (SCARB1). The cholesterol transfer activity of SCARB1 allows E2 exposure and binding of E2 to SCARB1 and the tetraspanin CD81. E1/E2 heterodimer binding on CD81 activates the epithelial growth factor receptor (EGFR) signaling pathway. Diffusion of the complex E1-E2-EGFR-SCARB1-CD81 to the cell lateral membrane allows further interaction with Claudin 1 (CLDN1) and occludin (OCLN) to finally trigger HCV entry. Inhibits host EIF2AK2/PKR activation, preventing the establishment of an antiviral state. Viral ligand for CD209/DC-SIGN and CLEC4M/DC-SIGNR, which are respectively found on dendritic cells (DCs), and on liver sinusoidal endothelial cells and macrophage-like cells of lymph node sinuses. These interactions allow the capture of circulating HCV particles by these cells and subsequent facilitated transmission to permissive cells such as hepatocytes and lymphocyte subpopulations. The interaction between E2 and host amino acid transporter complex formed by SLC3A2 and SLC7A5/LAT1 may facilitate viral entry into host cell. In terms of biological role, ion channel protein that acts as a viroporin and plays an essential role in the assembly, envelopment and secretion of viral particles. Regulates the host cell secretory pathway, which induces the intracellular retention of viral glycoproteins and favors assembly of viral particles. Creates a pore in acidic organelles and releases Ca(2+) and H(+) in the cytoplasm of infected cells, leading to a productive viral infection. High levels of cytoplasmic Ca(2+) may trigger membrane trafficking and transport of viral ER-associated proteins to viroplasms, sites of viral genome replication. This ionic imbalance induces the assembly of the inflammasome complex, which triggers the maturation of pro-IL-1beta into IL-1beta through the action of caspase-1. Targets also host mitochondria and induces mitochondrial depolarization. In addition of its role as a viroporin, acts as a lipid raft adhesion factor. Cysteine protease required for the proteolytic auto-cleavage between the non-structural proteins NS2 and NS3. The N-terminus of NS3 is required for the function of NS2 protease (active region NS2-3). Promotes the initiation of viral particle assembly by mediating the interaction between structural and non-structural proteins. Its function is as follows. Displays three enzymatic activities: serine protease with a chymotrypsin-like fold, NTPase and RNA helicase. NS3 serine protease, in association with NS4A, is responsible for the cleavages of NS3-NS4A, NS4A-NS4B, NS4B-NS5A and NS5A-NS5B. The NS3/NS4A complex prevents phosphorylation of host IRF3, thus preventing the establishment of dsRNA induced antiviral state. The NS3/NS4A complex induces host amino acid transporter component SLC3A2, thus contributing to HCV propagation. NS3 RNA helicase binds to RNA and unwinds both dsDNA and dsRNA in the 3' to 5' direction, and likely resolves RNA complicated stable secondary structures in the template strand. Binds a single ATP and catalyzes the unzipping of a single base pair of dsRNA. Inhibits host antiviral proteins TBK1 and IRF3 thereby preventing the establishment of an antiviral state. Cleaves host MAVS/CARDIF thereby preventing the establishment of an antiviral state. Cleaves host TICAM1/TRIF, thereby disrupting TLR3 signaling and preventing the establishment of an antiviral state. Functionally, peptide cofactor which forms a non-covalent complex with the N-terminal of NS3 serine protease. The NS3/NS4A complex prevents phosphorylation of host IRF3, thus preventing the establishment of dsRNA induced antiviral state. The NS3/NS4A complex induces host amino acid transporter component SLC3A2, thus contributing to HCV propagation. In terms of biological role, induces a specific membrane alteration that serves as a scaffold for the virus replication complex. This membrane alteration gives rise to the so-called ER-derived membranous web that contains the replication complex. NS4B self-interaction contributes to its function in membranous web formation. Promotes host TRIF protein degradation in a CASP8-dependent manner thereby inhibiting host TLR3-mediated interferon signaling. Disrupts the interaction between STING and TBK1 contributing to the inhibition of interferon signaling. Phosphorylated protein that is indispensable for viral replication and assembly. Both hypo- and hyperphosphorylated states are required for the viral life cycle. The hyperphosphorylated form of NS5A is an inhibitor of viral replication. Involved in RNA-binding and especially in binding to the viral genome. Zinc is essential for RNA-binding. Participates in the viral particle production as a result of its interaction with the mature viral core protein. Its interaction with host VAPB may target the viral replication complex to vesicles. Down-regulates viral IRES translation initiation. Mediates interferon resistance, presumably by interacting with and inhibiting host EIF2AK2/PKR. Prevents BIN1-induced apoptosis. Acts as a transcriptional activator of some host genes important for viral replication when localized in the nucleus. Via the interaction with host PACSIN2, modulates lipid droplet formation in order to promote virion assembly. Modulates TNFRSF21/DR6 signaling pathway for viral propagation. Its function is as follows. RNA-dependent RNA polymerase that performs primer-template recognition and RNA synthesis during viral replication. Initiates RNA transcription/replication at a flavin adenine dinucleotide (FAD), resulting in a 5'- FAD cap on viral RNAs. In this way, recognition of viral 5' RNA by host pattern recognition receptors can be bypassed, thereby evading activation of antiviral pathways. The protein is Genome polyprotein of Hepatitis C virus genotype 2k (isolate VAT96) (HCV).